Consider the following 523-residue polypeptide: 2-isopropylmalate synthase (523 aa).

A Pyruvate carboxyltransferase domain is found at 5–267 (VIIFDTTLRD…HTAINHQEIW (263 aa)). Residues Asp-14, His-202, His-204, and Asn-238 each coordinate Mn(2+). The interval 392–523 (RLDYFSVQSG…QHNENNKETV (132 aa)) is regulatory domain.

Belongs to the alpha-IPM synthase/homocitrate synthase family. LeuA type 1 subfamily. As to quaternary structure, homodimer. Mn(2+) serves as cofactor.

It is found in the cytoplasm. It carries out the reaction 3-methyl-2-oxobutanoate + acetyl-CoA + H2O = (2S)-2-isopropylmalate + CoA + H(+). The protein operates within amino-acid biosynthesis; L-leucine biosynthesis; L-leucine from 3-methyl-2-oxobutanoate: step 1/4. In terms of biological role, catalyzes the condensation of the acetyl group of acetyl-CoA with 3-methyl-2-oxobutanoate (2-ketoisovalerate) to form 3-carboxy-3-hydroxy-4-methylpentanoate (2-isopropylmalate). The sequence is that of 2-isopropylmalate synthase from Escherichia coli (strain K12 / MC4100 / BW2952).